Consider the following 706-residue polypeptide: MDKSFTLNRLDNGIAVLTMDVPGETMNTLRAEFGPEICEMLAEIKADAGIRGVVIISGKKDSFVAGADISMLDACATAEDARELSKQGHEVFFALESLSIPVVAAINGACLGGGLELALACHQRVCTDSNKTMLGLPEVQLGLLPGGGGTQRLPRLVGIAKSLDMMLTGKQLRAKQALKMGLVDDVVPESILLQTAIEMALAGARPAKKPKLSTVEKLLEGTPVGRNIIFEQALKQVNKKTQGNYPAPEKIIDCVRQGVTKGIVKGLEVEAQHFGDLVVSNESEALRSIFFATTEMKKESGAGDVSPKAVNKVMVLGGGLMGGGIASVTTTKAKIPVRVKDISEIGLSNALAYAYKLLAKGVKRRHMTPAVRDNLMALMTTTTEYKGIKDADMVVEAVFEDLNLKHQMVKDVERECGEHTIFASNTSSLPIKQIAEAAERPENVIGLHYFSPVEKMPLVEVIAHDKTSPQTIATTVAFARKQGKTPIVVKDGAGFYVNRILALYMNEAANLLLEGQSVDHLDKALVKFGFPVGPMTLLDEVGIDVGAKISPILEKELGERFKAPAAFDKLLADDRKGRKNGKGFYQYGAKSKKKLVDESVYGVLGLTPGADGEPIALAERCVVQMLNEAVRCLEEGIIASPRDGDIGAIFGIGFPPFLGGPFRYMDSLGAKHLVETLKRYQDQFGDRFAPCDRLVEMAESGSKFYE.

The tract at residues 1-188 (MDKSFTLNRL…KMGLVDDVVP (188 aa)) is enoyl-CoA hydratase. Residues 308 to 706 (KAVNKVMVLG…MAESGSKFYE (399 aa)) are 3-hydroxyacyl-CoA dehydrogenase.

The protein in the N-terminal section; belongs to the enoyl-CoA hydratase/isomerase family. This sequence in the central section; belongs to the 3-hydroxyacyl-CoA dehydrogenase family. As to quaternary structure, heterotetramer of two alpha chains (FadJ) and two beta chains (FadI).

It is found in the cytoplasm. The enzyme catalyses a (3S)-3-hydroxyacyl-CoA = a (2E)-enoyl-CoA + H2O. It carries out the reaction a 4-saturated-(3S)-3-hydroxyacyl-CoA = a (3E)-enoyl-CoA + H2O. The catalysed reaction is a (3S)-3-hydroxyacyl-CoA + NAD(+) = a 3-oxoacyl-CoA + NADH + H(+). It catalyses the reaction (3S)-3-hydroxybutanoyl-CoA = (3R)-3-hydroxybutanoyl-CoA. The protein operates within lipid metabolism; fatty acid beta-oxidation. In terms of biological role, catalyzes the formation of a hydroxyacyl-CoA by addition of water on enoyl-CoA. Also exhibits 3-hydroxyacyl-CoA epimerase and 3-hydroxyacyl-CoA dehydrogenase activities. The sequence is that of Fatty acid oxidation complex subunit alpha from Shewanella loihica (strain ATCC BAA-1088 / PV-4).